Reading from the N-terminus, the 111-residue chain is Universal stress protein B (111 aa).

A run of 2 helical transmembrane segments spans residues 1–21 (MFSTIALFWALCLVCIINMMR) and 90–110 (FILTSSLSGLVVICLISMLIW).

The protein belongs to the universal stress protein B family.

The protein localises to the cell inner membrane. This is Universal stress protein B from Photorhabdus laumondii subsp. laumondii (strain DSM 15139 / CIP 105565 / TT01) (Photorhabdus luminescens subsp. laumondii).